Consider the following 148-residue polypeptide: UPF0260 protein PM0539 (148 aa).

The protein belongs to the UPF0260 family.

This Pasteurella multocida (strain Pm70) protein is UPF0260 protein PM0539.